A 600-amino-acid polypeptide reads, in one-letter code: DDB1- and CUL4-associated factor 15 (600 aa).

The segment at 1-29 is disordered; sequence MAPSSKSERNSGAGSAGGGPGGTGGKRAV. Residues 14 to 27 show a composition bias toward gly residues; it reads GSAGGGPGGTGGKR. The residue at position 50 (Ser-50) is a Phosphoserine. Cys-193, Cys-196, Cys-211, and His-214 together coordinate Zn(2+). Position 314 is a phosphoserine (Ser-314). Positions 334-343 are enriched in basic and acidic residues; it reads AKGSPLEETR. The disordered stretch occupies residues 334–384; it reads AKGSPLEETRLPSSLGPSSSRCRPSLEPQAPSGEVVPRDSPPAAETTAPEP. 2 stretches are compositionally biased toward low complexity: residues 344 to 359 and 374 to 384; these read LPSS…RPSL and PPAAETTAPEP.

In terms of assembly, component of the DCX(DCAF15) complex, also named CLR4(DCAF15) complex, composed of DCAF15, DDB1, cullin-4 (CUL4A or CUL4B), DDA1 and RBX1.

Its pathway is protein modification; protein ubiquitination. In terms of biological role, substrate-recognition component of the DCX(DCAF15) complex, a cullin-4-RING E3 ubiquitin-protein ligase complex that mediates ubiquitination and degradation of target proteins. The DCX(DCAF15) complex acts as a regulator of the natural killer (NK) cells effector functions, possibly by mediating ubiquitination and degradation of cohesin subunits SMC1A and SMC3. May play a role in the activation of antigen-presenting cells (APC) and their interaction with NK cells. In Mus musculus (Mouse), this protein is DDB1- and CUL4-associated factor 15.